Reading from the N-terminus, the 405-residue chain is Type III polyketide synthase 10 (405 aa).

The segment covering 1–18 (MVSTNAGGIASKQASSMA) has biased composition (polar residues). Positions 1–20 (MVSTNAGGIASKQASSMAPN) are disordered. Cys-170 acts as the Nucleophile in catalysis.

It belongs to the thiolase-like superfamily. Chalcone/stilbene synthases family. In terms of assembly, interacts with STS1. Expressed in adult flowers.

Its subcellular location is the endoplasmic reticulum. Its function is as follows. Plant type III polyketide synthases (PKSs) that catalyzes the condensation of fatty acyl-CoA with malonyl-CoA to generate triketide and tetraketide alpha-pyrones, the main components of pollen exine and potential sporopollenin precursors. May be involved in the synthesis of sporopollenin precursors in tapetal cells to regulate pollen wall formation. Required for exine and Ubisch body formation in anthers. Does not possess chalcone synthase (CHS) activity in vitro with the substrates 4-coumaroyl-CoA and malonyl-CoA. The sequence is that of Type III polyketide synthase 10 from Oryza sativa subsp. japonica (Rice).